Here is a 177-residue protein sequence, read N- to C-terminus: B-phycoerythrin beta chain (177 aa).

The (2R,3E)-phycoerythrobilin site is built by cysteine 50 and cysteine 61. The residue at position 72 (asparagine 72) is an N4-methylasparagine. Residues cysteine 82 and cysteine 158 each coordinate (2R,3E)-phycoerythrobilin.

This sequence belongs to the phycobiliprotein family. In terms of assembly, heterotetramer of one alpha-1, one alpha-2, and two beta chains. Contains three covalently linked bilin chromophores.

It is found in the plastid. The protein localises to the chloroplast thylakoid membrane. Its function is as follows. Light-harvesting photosynthetic bile pigment-protein from the phycobiliprotein complex. In Guillardia theta (Cryptophyte), this protein is B-phycoerythrin beta chain (cpeB).